We begin with the raw amino-acid sequence, 166 residues long: MRVDTSELCDIYSDQVDVVEPIFSSFGGLSSFYGKITTVKCFESNGLIAEVLEEEGQGRVLLVDGGGVVRRALIDAELAQLAVDNGWEGIIVNGAVRQLDVLETLDIGIQALAPIPVGADDSMVGEVDTPVNFGGVTFLPEDYVYADLTGIVLSPELLDLQSEDIE.

This sequence belongs to the RraA family. In terms of assembly, homotrimer. Binds to both RNA-binding sites in the C-terminal region of Rne and to RhlB.

The protein resides in the cytoplasm. In terms of biological role, globally modulates RNA abundance by binding to RNase E (Rne) and regulating its endonucleolytic activity. Can modulate Rne action in a substrate-dependent manner by altering the composition of the degradosome. Modulates RNA-binding and helicase activities of the degradosome. The protein is Regulator of ribonuclease activity A of Glaesserella parasuis serovar 5 (strain SH0165) (Haemophilus parasuis).